Consider the following 336-residue polypeptide: Phenylalanine--tRNA ligase alpha subunit (336 aa).

Position 257 (glutamate 257) interacts with Mg(2+).

This sequence belongs to the class-II aminoacyl-tRNA synthetase family. Phe-tRNA synthetase alpha subunit type 1 subfamily. Tetramer of two alpha and two beta subunits. Requires Mg(2+) as cofactor.

It localises to the cytoplasm. The catalysed reaction is tRNA(Phe) + L-phenylalanine + ATP = L-phenylalanyl-tRNA(Phe) + AMP + diphosphate + H(+). The protein is Phenylalanine--tRNA ligase alpha subunit of Xanthomonas campestris pv. campestris (strain 8004).